Here is a 298-residue protein sequence, read N- to C-terminus: GTP cyclohydrolase FolE2 (298 aa).

It belongs to the GTP cyclohydrolase IV family.

The catalysed reaction is GTP + H2O = 7,8-dihydroneopterin 3'-triphosphate + formate + H(+). The protein operates within cofactor biosynthesis; 7,8-dihydroneopterin triphosphate biosynthesis; 7,8-dihydroneopterin triphosphate from GTP: step 1/1. Functionally, converts GTP to 7,8-dihydroneopterin triphosphate. The sequence is that of GTP cyclohydrolase FolE2 from Pseudomonas paraeruginosa (strain DSM 24068 / PA7) (Pseudomonas aeruginosa (strain PA7)).